The following is a 198-amino-acid chain: MLKKTLAALAIGSAVLAAGQVMAADYVIDKEGQHAFVDFKISHLGYSFITGTFKDLDGKFSFDAAKPEDAKIEVNVRTASVFTNHAERDKHITSKDFLDAGKFADAKFVSTSVKPTGKNADGKLTADVAGDLTLHGVTKPVVVKATFLGEGKDPWGGYRAGFEGTTSINRQDFGKMMDLGPASNNVDLYISFEGVKAK.

The signal sequence occupies residues 1–23; it reads MLKKTLAALAIGSAVLAAGQVMA.

It belongs to the UPF0312 family. Type 1 subfamily.

It localises to the periplasm. In Pseudomonas fluorescens (strain ATCC BAA-477 / NRRL B-23932 / Pf-5), this protein is UPF0312 protein PFL_5802.